A 337-amino-acid polypeptide reads, in one-letter code: Ketol-acid reductoisomerase (NADP(+)) (337 aa).

In terms of domain architecture, KARI N-terminal Rossmann spans 1-180 (MQVYYDKDAD…GGTKGGVIET (180 aa)). NADP(+) contacts are provided by residues 24-27 (YGSQ), R47, and S51. H106 is an active-site residue. NADP(+) is bound at residue G132. The 146-residue stretch at 181 to 326 (TFREETETDL…AQLRAMMPWI (146 aa)) folds into the KARI C-terminal knotted domain. Residues D189, E193, E225, and E229 each contribute to the Mg(2+) site. A substrate-binding site is contributed by S250.

It belongs to the ketol-acid reductoisomerase family. It depends on Mg(2+) as a cofactor.

It catalyses the reaction (2R)-2,3-dihydroxy-3-methylbutanoate + NADP(+) = (2S)-2-acetolactate + NADPH + H(+). It carries out the reaction (2R,3R)-2,3-dihydroxy-3-methylpentanoate + NADP(+) = (S)-2-ethyl-2-hydroxy-3-oxobutanoate + NADPH + H(+). It participates in amino-acid biosynthesis; L-isoleucine biosynthesis; L-isoleucine from 2-oxobutanoate: step 2/4. It functions in the pathway amino-acid biosynthesis; L-valine biosynthesis; L-valine from pyruvate: step 2/4. Functionally, involved in the biosynthesis of branched-chain amino acids (BCAA). Catalyzes an alkyl-migration followed by a ketol-acid reduction of (S)-2-acetolactate (S2AL) to yield (R)-2,3-dihydroxy-isovalerate. In the isomerase reaction, S2AL is rearranged via a Mg-dependent methyl migration to produce 3-hydroxy-3-methyl-2-ketobutyrate (HMKB). In the reductase reaction, this 2-ketoacid undergoes a metal-dependent reduction by NADPH to yield (R)-2,3-dihydroxy-isovalerate. This Neisseria meningitidis serogroup C (strain 053442) protein is Ketol-acid reductoisomerase (NADP(+)).